Here is a 680-residue protein sequence, read N- to C-terminus: DNA ligase 1 (680 aa).

NAD(+)-binding positions include 35–39 (DAEYD), 84–85 (SL), and D115. K117 acts as the N6-AMP-lysine intermediate in catalysis. The NAD(+) site is built by R138, E175, K295, and K319. Zn(2+) is bound by residues C413, C416, C431, and C436. The 82-residue stretch at 599–680 (REGSQLQGLK…FANLLKGLDR (82 aa)) folds into the BRCT domain.

It belongs to the NAD-dependent DNA ligase family. LigA subfamily. Requires Mg(2+) as cofactor. Mn(2+) serves as cofactor.

The enzyme catalyses NAD(+) + (deoxyribonucleotide)n-3'-hydroxyl + 5'-phospho-(deoxyribonucleotide)m = (deoxyribonucleotide)n+m + AMP + beta-nicotinamide D-nucleotide.. Functionally, DNA ligase that catalyzes the formation of phosphodiester linkages between 5'-phosphoryl and 3'-hydroxyl groups in double-stranded DNA using NAD as a coenzyme and as the energy source for the reaction. It is essential for DNA replication and repair of damaged DNA. This is DNA ligase 1 from Nitratidesulfovibrio vulgaris (strain DP4) (Desulfovibrio vulgaris).